Consider the following 505-residue polypeptide: Lysine--tRNA ligase (505 aa).

Residues E415 and E422 each contribute to the Mg(2+) site.

Belongs to the class-II aminoacyl-tRNA synthetase family. Homodimer. Mg(2+) serves as cofactor.

The protein resides in the cytoplasm. The catalysed reaction is tRNA(Lys) + L-lysine + ATP = L-lysyl-tRNA(Lys) + AMP + diphosphate. The polypeptide is Lysine--tRNA ligase (Edwardsiella ictaluri (strain 93-146)).